We begin with the raw amino-acid sequence, 535 residues long: Dual specificity calcium/calmodulin-dependent 3',5'-cyclic nucleotide phosphodiesterase 1B (535 aa).

The segment at 1–21 (MELSPRSPPEMLESDCPSPLE) is disordered. Phosphoserine is present on residues Ser-7 and Ser-14. Calmodulin-binding stretches follow at residues 27–47 (SKKM…QLEN) and 117–140 (EKPK…MFRR). A PDEase domain is found at 145-502 (VGPTYSTAVH…QKWKERAASG (358 aa)). His-222 (proton donor) is an active-site residue. His-226, His-262, Asp-263, and Asp-369 together coordinate Zn(2+). Asp-263 provides a ligand contact to Mg(2+). Disordered regions lie at residues 445 to 474 (PLTD…GDPN) and 495 to 535 (WKER…GNLD). Polar residues predominate over residues 454-463 (KSQPSFQWRQ). Phosphoserine is present on residues Ser-465 and Ser-513.

The protein belongs to the cyclic nucleotide phosphodiesterase family. PDE1 subfamily. In terms of assembly, homodimer. The cofactor is Zn(2+). It depends on Mg(2+) as a cofactor. Expressed in brain.

Its subcellular location is the cytoplasm. It localises to the cytosol. The enzyme catalyses a nucleoside 3',5'-cyclic phosphate + H2O = a nucleoside 5'-phosphate + H(+). It carries out the reaction 3',5'-cyclic GMP + H2O = GMP + H(+). It catalyses the reaction 3',5'-cyclic AMP + H2O = AMP + H(+). Type I PDE are activated by the binding of calmodulin in the presence of Ca(2+). Functionally, cyclic nucleotide phosphodiesterase with a dual specificity for the second messengers cAMP and cGMP, which are key regulators of many important physiological processes. Has a preference for cGMP as a substrate. The chain is Dual specificity calcium/calmodulin-dependent 3',5'-cyclic nucleotide phosphodiesterase 1B from Rattus norvegicus (Rat).